We begin with the raw amino-acid sequence, 262 residues long: Caffeyl-CoA reductase-Etf complex subunit CarD (262 aa).

This sequence belongs to the ETF beta-subunit/FixA family. Part of the homotrimeric caffeyl-CoA reductase-Etf complex composed of (R)-2-hydroxyisocaproyl-CoA dehydratase CarC, and the electron transfer flavoprotein (ETF) alpha (CarE) and beta (CarD) subunits. FAD is required as a cofactor. AMP serves as cofactor.

It localises to the cytoplasm. The enzyme catalyses hydrocaffeoyl-CoA + 2 reduced [2Fe-2S]-[ferredoxin] + 2 NAD(+) = (E)-caffeoyl-CoA + 2 oxidized [2Fe-2S]-[ferredoxin] + 2 NADH. Caffeyl-CoA reductase-Etf complex catalyzes the reduction of caffeyl-CoA to yield hydrocaffeyl-CoA. It couples the endergonic ferredoxin reduction with NADH as reductant to the exergonic reduction of caffeoyl-CoA with the same reductant. It uses the mechanism of electron bifurcation to overcome the steep energy barrier in ferredoxin reduction. The electron transfer flavoprotein (Etf) mediates the electron transfer between the different donors and acceptors. The complex can also reduce 4-coumaroyl-CoA and feruloyl-CoA. The protein is Caffeyl-CoA reductase-Etf complex subunit CarD of Acetobacterium woodii (strain ATCC 29683 / DSM 1030 / JCM 2381 / KCTC 1655 / WB1).